Reading from the N-terminus, the 214-residue chain is ATP synthase subunit a (214 aa).

Transmembrane regions (helical) follow at residues 9-29 (LDGM…VFMI), 64-84 (IMMV…TYGI), 88-108 (LWVN…SGYI), 121-141 (SGAP…SIMI), 150-170 (LVAN…VLSS), and 182-202 (LIMV…AYIF).

Belongs to the ATPase A chain family. As to quaternary structure, F-type ATPases have 2 components, CF(1) - the catalytic core - and CF(0) - the membrane proton channel. CF(1) has five subunits: alpha(3), beta(3), gamma(1), delta(1), epsilon(1). CF(0) has three main subunits: a, b and c.

It is found in the mitochondrion inner membrane. Functionally, mitochondrial membrane ATP synthase (F(1)F(0) ATP synthase or Complex V) produces ATP from ADP in the presence of a proton gradient across the membrane which is generated by electron transport complexes of the respiratory chain. F-type ATPases consist of two structural domains, F(1) - containing the extramembraneous catalytic core and F(0) - containing the membrane proton channel, linked together by a central stalk and a peripheral stalk. During catalysis, ATP synthesis in the catalytic domain of F(1) is coupled via a rotary mechanism of the central stalk subunits to proton translocation. Key component of the proton channel; it may play a direct role in the translocation of protons across the membrane. The protein is ATP synthase subunit a (ATP6) of Albinaria caerulea (Land snail).